Reading from the N-terminus, the 175-residue chain is Large ribosomal subunit protein uL10 (175 aa).

It belongs to the universal ribosomal protein uL10 family. In terms of assembly, part of the ribosomal stalk of the 50S ribosomal subunit. The N-terminus interacts with L11 and the large rRNA to form the base of the stalk. The C-terminus forms an elongated spine to which L12 dimers bind in a sequential fashion forming a multimeric L10(L12)X complex.

In terms of biological role, forms part of the ribosomal stalk, playing a central role in the interaction of the ribosome with GTP-bound translation factors. The chain is Large ribosomal subunit protein uL10 from Psychrobacter arcticus (strain DSM 17307 / VKM B-2377 / 273-4).